The primary structure comprises 575 residues: Proline--tRNA ligase 1 (575 aa).

This sequence belongs to the class-II aminoacyl-tRNA synthetase family. ProS type 1 subfamily. In terms of assembly, homodimer.

The protein localises to the cytoplasm. The catalysed reaction is tRNA(Pro) + L-proline + ATP = L-prolyl-tRNA(Pro) + AMP + diphosphate. Functionally, catalyzes the attachment of proline to tRNA(Pro) in a two-step reaction: proline is first activated by ATP to form Pro-AMP and then transferred to the acceptor end of tRNA(Pro). As ProRS can inadvertently accommodate and process non-cognate amino acids such as alanine and cysteine, to avoid such errors it has two additional distinct editing activities against alanine. One activity is designated as 'pretransfer' editing and involves the tRNA(Pro)-independent hydrolysis of activated Ala-AMP. The other activity is designated 'posttransfer' editing and involves deacylation of mischarged Ala-tRNA(Pro). The misacylated Cys-tRNA(Pro) is not edited by ProRS. In Anaeromyxobacter dehalogenans (strain 2CP-C), this protein is Proline--tRNA ligase 1.